Here is a 305-residue protein sequence, read N- to C-terminus: Heterogeneous nuclear ribonucleoprotein A0 (305 aa).

An N-acetylmethionine modification is found at Met-1. An RRM 1 domain is found at 7–86; that stretch reads CKLFIGGLNV…VELKRAVSRE (80 aa). Ser-68 carries the phosphoserine modification. Lys-80 is covalently cross-linked (Glycyl lysine isopeptide (Lys-Gly) (interchain with G-Cter in SUMO2)). The residue at position 84 (Ser-84) is a Phosphoserine; by MAPKAPK2. Glycyl lysine isopeptide (Lys-Gly) (interchain with G-Cter in SUMO2) cross-links involve residues Lys-96, Lys-98, Lys-99, and Lys-106. Residues 98–175 form the RRM 2 domain; sequence KKLFVGGLKG…HRVEVKKAVP (78 aa). N6-acetyllysine is present on Lys-133. Arg-139 carries the omega-N-methylarginine modification. Residues Lys-154, Lys-159, Lys-172, and Lys-176 each participate in a glycyl lysine isopeptide (Lys-Gly) (interchain with G-Cter in SUMO2) cross-link. Disordered regions lie at residues 174–214 and 262–305; these read VPKE…KGGG and QSSY…GSSF. Composition is skewed to gly residues over residues 181–200 and 269–281; these read SGGG…GRGR and KSGG…GSSW. Ser-188 carries the phosphoserine modification. An Omega-N-methylarginine modification is found at Arg-284. The span at 290–305 shows a compositional bias: gly residues; sequence YRGGYGGGGGYGGSSF. Arg-291 carries the asymmetric dimethylarginine; alternate modification. Arg-291 is modified (dimethylated arginine; alternate). At Arg-291 the chain carries Omega-N-methylarginine; alternate.

Phosphorylated at Ser-84 by MAPKAPK2 in response to LPS treatment, promoting stabilization of GADD45A mRNA. In terms of processing, arg-291 is dimethylated, probably to asymmetric dimethylarginine.

The protein localises to the nucleus. In terms of biological role, mRNA-binding component of ribonucleosomes. Specifically binds AU-rich element (ARE)-containing mRNAs. Involved in post-transcriptional regulation of cytokines mRNAs. The chain is Heterogeneous nuclear ribonucleoprotein A0 (HNRNPA0) from Homo sapiens (Human).